The primary structure comprises 925 residues: Aspulvinone E synthetase melA (925 aa).

The segment at 11-434 (ETAAARNGDG…GGRAKETIII (424 aa)) is adenylation (A) domain. The Carrier domain occupies 564–644 (SPKNDFEKGL…ELAAALDNLY (81 aa)). O-(pantetheine 4'-phosphoryl)serine is present on Ser601. Residues 663–923 (PLWLVHPGAG…KILRSALAER (261 aa)) form a thioesterase (TE) domain region.

This sequence belongs to the NRP synthetase family.

It is found in the cytoplasm. The catalysed reaction is 2 3-(4-hydroxyphenyl)pyruvate + AH2 + 2 ATP + O2 = aspulvinone E + A + 2 AMP + CO2 + 2 diphosphate + H2O + H(+). Nonribosomal peptide synthase; part of the gene cluster that mediates the biosynthesis of Asp-melanin, a pigment that confers resistance against UV light and hampers phagocytosis by soil amoeba. The nonribosomal peptide synthase melA converts 4-hydroxyphenylpyruvate (4-HPPA) to aspulvinone E. The tyrosinase tyrP then performs hydroxylations of both aromatic moieties of aspulvinone E. The product of tyrP is highly unstable, and, due to the high reactivity of methides and ortho-diquinones, the polymeric Asp-melanin forms spontaneously. The polypeptide is Aspulvinone E synthetase melA (Aspergillus terreus (strain NIH 2624 / FGSC A1156)).